The chain runs to 804 residues: Phenylalanine--tRNA ligase beta subunit (804 aa).

Positions 38-148 (RAAFRAFTIA…ENAPVGTSFA (111 aa)) constitute a tRNA-binding domain. Residues 401–476 (HTARVIDFPV…RIHGINRIDP (76 aa)) form the B5 domain. 4 residues coordinate Mg(2+): D454, D460, E463, and E464. Positions 710-803 (SLFQSLKRDY…VAKQTGGVLR (94 aa)) constitute an FDX-ACB domain.

It belongs to the phenylalanyl-tRNA synthetase beta subunit family. Type 1 subfamily. Tetramer of two alpha and two beta subunits. The cofactor is Mg(2+).

Its subcellular location is the cytoplasm. The enzyme catalyses tRNA(Phe) + L-phenylalanine + ATP = L-phenylalanyl-tRNA(Phe) + AMP + diphosphate + H(+). In Brucella abortus (strain 2308), this protein is Phenylalanine--tRNA ligase beta subunit.